The chain runs to 338 residues: Probable 1-aminocyclopropane-1-carboxylate deaminase (338 aa).

Lys-51 bears the N6-(pyridoxal phosphate)lysine mark. Ser-78 serves as the catalytic Nucleophile.

The protein belongs to the ACC deaminase/D-cysteine desulfhydrase family. Pyridoxal 5'-phosphate serves as cofactor.

It carries out the reaction 1-aminocyclopropane-1-carboxylate + H2O = 2-oxobutanoate + NH4(+). Catalyzes a cyclopropane ring-opening reaction, the irreversible conversion of 1-aminocyclopropane-1-carboxylate (ACC) to ammonia and alpha-ketobutyrate. The sequence is that of Probable 1-aminocyclopropane-1-carboxylate deaminase from Schizosaccharomyces pombe (strain 972 / ATCC 24843) (Fission yeast).